A 249-amino-acid chain; its full sequence is Proline-rich antigen (249 aa).

Composition is skewed to pro residues over residues 1–20 (MTDQPPPSGSNPTPAPPPPG) and 38–87 (YPPP…PPGP). The tract at residues 1 to 87 (MTDQPPPSGS…GAYAPPPPGP (87 aa)) is disordered. The 1-1; approximate repeat unit spans residues 34 to 43 (LGSAYPPPTA). The interval 34–85 (LGSAYPPPTAPPVGGSYPPPPPPGGSYPPPPPPGGSYPPPPPSTGAYAPPPP) is 5 X 10 AA tandem repeats of [PV]-G-G-S-Y-P-P-P-P-P. Repeat copies occupy residues 46–55 (VGGSYPPPPP), 56–65 (PGGSYPPPPP), and 66–75 (PGGSYPPPPP). The 1-5; approximate repeat unit spans residues 76–85 (STGAYAPPPP). The RDD domain occupies 99-242 (FWVTRVLAYV…KRQTLADKIM (144 aa)). Tandem repeats lie at residues 101–123 (VTRVLAYVIDNIPATVLLGIGML) and 134–156 (VTDITQYNVNQYCATQPTGIGML). Residues 101–156 (VTRVLAYVIDNIPATVLLGIGMLIQTLTKQEACVTDITQYNVNQYCATQPTGIGML) are 2 X 23 AA approximate repeats. A run of 3 helical transmembrane segments spans residues 104 to 124 (VLAYVIDNIPATVLLGIGMLI), 151 to 171 (TGIGMLAFWFAWLMATAYLVW), and 212 to 232 (LAHFVDAVICCIGFLFPLWDS).

This sequence belongs to the mycobacterial Pra family.

It is found in the cell membrane. The protein is Proline-rich antigen (ag36) of Mycobacterium leprae (strain TN).